Consider the following 202-residue polypeptide: Na(+)-translocating NADH-quinone reductase subunit E (202 aa).

Helical transmembrane passes span 11–31, 35–55, 79–99, 114–134, 144–164, and 180–200; these read AVFI…FIAI, VETA…TVPA, LSFL…QILE, GVFL…LFMV, VVYG…LAGI, and LGIT…FSGV.

The protein belongs to the NqrDE/RnfAE family. Composed of six subunits; NqrA, NqrB, NqrC, NqrD, NqrE and NqrF.

The protein localises to the cell inner membrane. It carries out the reaction a ubiquinone + n Na(+)(in) + NADH + H(+) = a ubiquinol + n Na(+)(out) + NAD(+). Functionally, NQR complex catalyzes the reduction of ubiquinone-1 to ubiquinol by two successive reactions, coupled with the transport of Na(+) ions from the cytoplasm to the periplasm. NqrA to NqrE are probably involved in the second step, the conversion of ubisemiquinone to ubiquinol. This is Na(+)-translocating NADH-quinone reductase subunit E from Stutzerimonas stutzeri (strain A1501) (Pseudomonas stutzeri).